We begin with the raw amino-acid sequence, 430 residues long: BSD domain-containing protein 1 (430 aa).

A phosphoserine mark is found at S92 and S166. The 53-residue stretch at 146–198 (WLSQFCLEEKKGEISELLVGSPSIRALYTKMVPAAVSHSEFWHRYFYKVHQLE) folds into the BSD domain. 2 disordered regions span residues 247–298 (STFP…APEA) and 319–398 (LAVD…WEKD). Over residues 276–291 (PSESSESISLVTQIAN) the composition is skewed to polar residues. Over residues 350 to 367 (PPARVETLREEAPTDLRV) the composition is skewed to basic and acidic residues. T356 carries the post-translational modification Phosphothreonine. Residues 371–390 (NSDSGKSTPSNNGKKGSSTD) show a composition bias toward polar residues. 3 positions are modified to phosphoserine: S387, S388, and S418.

This chain is BSD domain-containing protein 1 (BSDC1), found in Homo sapiens (Human).